A 258-amino-acid chain; its full sequence is Acetylglutamate kinase (258 aa).

Substrate contacts are provided by residues 41–42, Arg-63, and Asn-156; that span reads GG.

Belongs to the acetylglutamate kinase family. ArgB subfamily.

It localises to the cytoplasm. It catalyses the reaction N-acetyl-L-glutamate + ATP = N-acetyl-L-glutamyl 5-phosphate + ADP. It functions in the pathway amino-acid biosynthesis; L-arginine biosynthesis; N(2)-acetyl-L-ornithine from L-glutamate: step 2/4. Catalyzes the ATP-dependent phosphorylation of N-acetyl-L-glutamate. The sequence is that of Acetylglutamate kinase from Bacillus pumilus (strain SAFR-032).